Reading from the N-terminus, the 313-residue chain is Aspartate carbamoyltransferase catalytic subunit (313 aa).

Residues arginine 58 and threonine 59 each contribute to the carbamoyl phosphate site. Lysine 86 serves as a coordination point for L-aspartate. Positions 108, 136, and 139 each coordinate carbamoyl phosphate. Residues arginine 169 and arginine 223 each contribute to the L-aspartate site. Carbamoyl phosphate contacts are provided by glycine 264 and proline 265.

This sequence belongs to the aspartate/ornithine carbamoyltransferase superfamily. ATCase family. As to quaternary structure, heterododecamer (2C3:3R2) of six catalytic PyrB chains organized as two trimers (C3), and six regulatory PyrI chains organized as three dimers (R2).

The enzyme catalyses carbamoyl phosphate + L-aspartate = N-carbamoyl-L-aspartate + phosphate + H(+). Its pathway is pyrimidine metabolism; UMP biosynthesis via de novo pathway; (S)-dihydroorotate from bicarbonate: step 2/3. Its function is as follows. Catalyzes the condensation of carbamoyl phosphate and aspartate to form carbamoyl aspartate and inorganic phosphate, the committed step in the de novo pyrimidine nucleotide biosynthesis pathway. The protein is Aspartate carbamoyltransferase catalytic subunit of Halothermothrix orenii (strain H 168 / OCM 544 / DSM 9562).